The primary structure comprises 290 residues: Glycine--tRNA ligase alpha subunit (290 aa).

Belongs to the class-II aminoacyl-tRNA synthetase family. In terms of assembly, tetramer of two alpha and two beta subunits.

The protein resides in the cytoplasm. It catalyses the reaction tRNA(Gly) + glycine + ATP = glycyl-tRNA(Gly) + AMP + diphosphate. This chain is Glycine--tRNA ligase alpha subunit, found in Syntrophobacter fumaroxidans (strain DSM 10017 / MPOB).